The following is a 358-amino-acid chain: Protein RecA 2 (358 aa).

Position 69–76 (69–76 (GPESSGKT)) interacts with ATP. The disordered stretch occupies residues 331-358 (GIGKSGAPSPRRRTSPRRPKVAARSAAV). Residues 340 to 351 (PRRRTSPRRPKV) show a composition bias toward basic residues.

The protein belongs to the RecA family.

It localises to the cytoplasm. Functionally, can catalyze the hydrolysis of ATP in the presence of single-stranded DNA, the ATP-dependent uptake of single-stranded DNA by duplex DNA, and the ATP-dependent hybridization of homologous single-stranded DNAs. It interacts with LexA causing its activation and leading to its autocatalytic cleavage. This chain is Protein RecA 2, found in Myxococcus xanthus.